A 159-amino-acid polypeptide reads, in one-letter code: Nucleoside diphosphate kinase (159 aa).

5 residues coordinate ATP: lysine 14, phenylalanine 62, arginine 90, threonine 96, and arginine 107. Histidine 123 acts as the Pros-phosphohistidine intermediate in catalysis.

Belongs to the NDK family. Requires Mg(2+) as cofactor.

It is found in the cytoplasm. The catalysed reaction is a 2'-deoxyribonucleoside 5'-diphosphate + ATP = a 2'-deoxyribonucleoside 5'-triphosphate + ADP. The enzyme catalyses a ribonucleoside 5'-diphosphate + ATP = a ribonucleoside 5'-triphosphate + ADP. Functionally, major role in the synthesis of nucleoside triphosphates other than ATP. The ATP gamma phosphate is transferred to the NDP beta phosphate via a ping-pong mechanism, using a phosphorylated active-site intermediate. This is Nucleoside diphosphate kinase from Pyrococcus abyssi (strain GE5 / Orsay).